The sequence spans 98 residues: NADH-ubiquinone oxidoreductase chain 4L (98 aa).

The next 3 helical transmembrane spans lie at 1-21, 29-49, and 61-81; these read MSMVYINLFLAFIMSLMGLLV, SLLCLEGMMLSLFIMISITIL, and IILLVFAACEAALGLSLLVMV.

This sequence belongs to the complex I subunit 4L family. In terms of assembly, core subunit of respiratory chain NADH dehydrogenase (Complex I) which is composed of 45 different subunits.

It is found in the mitochondrion inner membrane. It carries out the reaction a ubiquinone + NADH + 5 H(+)(in) = a ubiquinol + NAD(+) + 4 H(+)(out). In terms of biological role, core subunit of the mitochondrial membrane respiratory chain NADH dehydrogenase (Complex I) which catalyzes electron transfer from NADH through the respiratory chain, using ubiquinone as an electron acceptor. Part of the enzyme membrane arm which is embedded in the lipid bilayer and involved in proton translocation. In Mephitis mephitis (Striped skunk), this protein is NADH-ubiquinone oxidoreductase chain 4L (MT-ND4L).